The sequence spans 670 residues: Soluble lamin-associated protein of 75 kDa (670 aa).

2 disordered regions span residues 273–301 (PKRPMSGEYGPASVPEYEARTEDNQSSEM) and 314–670 (STSE…AKLT). Residue serine 350 is modified to Phosphoserine. Over residues 358–375 (SQTSLTASINKLESTARP) the composition is skewed to polar residues. Acidic residues predominate over residues 378-387 (SSEEFLEEEP). A Phosphoserine modification is found at serine 379. Basic and acidic residues predominate over residues 414–423 (EKQDGEKESE). The segment covering 442–453 (TEEEDSTSEVLD) has biased composition (acidic residues). Phosphoserine is present on serine 449. Positions 460–470 (PFNSSEDSTNL) are enriched in polar residues. Basic and acidic residues-rich tracts occupy residues 479-494 (KPPEVDAPDKTPRIPD) and 504-514 (SDEKGHMEEKL). Serine 515 is modified (phosphoserine). Polar residues-rich tracts occupy residues 558–569 (ENLSPNTTSSLE) and 579–591 (PQETSTALPQSSL). Serine 615, serine 618, and serine 635 each carry phosphoserine. The segment covering 651–670 (NLRRKAKGHKGPAKKKAKLT) has biased composition (basic residues).

This sequence belongs to the FAM169 family.

It localises to the nucleus envelope. It is found in the nucleus inner membrane. The protein is Soluble lamin-associated protein of 75 kDa (FAM169A) of Homo sapiens (Human).